Reading from the N-terminus, the 693-residue chain is Sulfite reductase 1 [ferredoxin], chloroplastic (693 aa).

The N-terminal 62 residues, 1-62 (MTTSFGAAIN…PSSIVRAVST (62 aa)), are a transit peptide targeting the chloroplast. [4Fe-4S] cluster is bound by residues Cys-502, Cys-508, Cys-548, and Cys-552. A siroheme-binding site is contributed by Cys-552.

Belongs to the nitrite and sulfite reductase 4Fe-4S domain family. In terms of assembly, monomer. Interacts with ferredoxin. The cofactor is siroheme. Requires [4Fe-4S] cluster as cofactor. Post-translationally, phosphorylated; this phosphorylation reduces DNA-binding. As to expression, expressed in leaves, stems, roots and petals.

It is found in the plastid. Its subcellular location is the chloroplast stroma. The protein resides in the chloroplast nucleoid. The protein localises to the plastid stroma. It carries out the reaction hydrogen sulfide + 6 oxidized [2Fe-2S]-[ferredoxin] + 3 H2O = sulfite + 6 reduced [2Fe-2S]-[ferredoxin] + 7 H(+). Essential protein with sulfite reductase activity required in assimilatory sulfate reduction pathway during both primary and secondary metabolism and thus involved in development and growth. Its function is as follows. DNA-binding protein that binds to both double-stranded and single-stranded DNA without significant sequence specificity to reversibly repress the transcriptional activity of chloroplast nucleoids by promoting DNA compaction and possibly regulate DNA replication. The protein is Sulfite reductase 1 [ferredoxin], chloroplastic (SIR1) of Nicotiana tabacum (Common tobacco).